Reading from the N-terminus, the 255-residue chain is uncharacterized protein (255 aa).

Asparagine 16 and asparagine 58 each carry an N-linked (GlcNAc...) asparagine; by host glycan. A run of 2 helical transmembrane segments spans residues 72-92 and 104-124; these read LIYS…TIYY and LWYI…SHIC.

It localises to the membrane. This is an uncharacterized protein from Acanthamoeba polyphaga (Amoeba).